Reading from the N-terminus, the 122-residue chain is Small ribosomal subunit protein uS13 (122 aa).

The disordered stretch occupies residues Arg93–Lys122.

Belongs to the universal ribosomal protein uS13 family. Part of the 30S ribosomal subunit. Forms a loose heterodimer with protein S19. Forms two bridges to the 50S subunit in the 70S ribosome.

Functionally, located at the top of the head of the 30S subunit, it contacts several helices of the 16S rRNA. In the 70S ribosome it contacts the 23S rRNA (bridge B1a) and protein L5 of the 50S subunit (bridge B1b), connecting the 2 subunits; these bridges are implicated in subunit movement. Contacts the tRNAs in the A and P-sites. This is Small ribosomal subunit protein uS13 from Micrococcus luteus (strain ATCC 4698 / DSM 20030 / JCM 1464 / CCM 169 / CCUG 5858 / IAM 1056 / NBRC 3333 / NCIMB 9278 / NCTC 2665 / VKM Ac-2230) (Micrococcus lysodeikticus).